We begin with the raw amino-acid sequence, 992 residues long: Translation initiation factor IF-2 (992 aa).

Disordered regions lie at residues 154–173 (RRLR…EREA) and 338–399 (AAPG…RPES). A tr-type G domain is found at 492-661 (PRAPVVTVMG…LLQAEVLELK (170 aa)). Positions 501-508 (GHVDHGKT) are G1. Residue 501–508 (GHVDHGKT) coordinates GTP. The interval 526 to 530 (GITQH) is G2. Positions 547-550 (DTPG) are G3. GTP-binding positions include 547-551 (DTPGH) and 601-604 (NKID). A G4 region spans residues 601 to 604 (NKID). The G5 stretch occupies residues 637–639 (SAH).

Belongs to the TRAFAC class translation factor GTPase superfamily. Classic translation factor GTPase family. IF-2 subfamily.

It is found in the cytoplasm. In terms of biological role, one of the essential components for the initiation of protein synthesis. Protects formylmethionyl-tRNA from spontaneous hydrolysis and promotes its binding to the 30S ribosomal subunits. Also involved in the hydrolysis of GTP during the formation of the 70S ribosomal complex. This chain is Translation initiation factor IF-2, found in Polaromonas naphthalenivorans (strain CJ2).